We begin with the raw amino-acid sequence, 119 residues long: Large ribosomal subunit protein uL18 (119 aa).

This sequence belongs to the universal ribosomal protein uL18 family. In terms of assembly, part of the 50S ribosomal subunit; part of the 5S rRNA/L5/L18/L25 subcomplex. Contacts the 5S and 23S rRNAs.

Its function is as follows. This is one of the proteins that bind and probably mediate the attachment of the 5S RNA into the large ribosomal subunit, where it forms part of the central protuberance. This chain is Large ribosomal subunit protein uL18, found in Chlorobium phaeovibrioides (strain DSM 265 / 1930) (Prosthecochloris vibrioformis (strain DSM 265)).